A 317-amino-acid polypeptide reads, in one-letter code: 4-diphosphocytidyl-2-C-methyl-D-erythritol kinase (317 aa).

Lys-11 is a catalytic residue. 99–109 contributes to the ATP binding site; the sequence is PVAAGLAGGST. Asp-141 is an active-site residue.

The protein belongs to the GHMP kinase family. IspE subfamily.

The catalysed reaction is 4-CDP-2-C-methyl-D-erythritol + ATP = 4-CDP-2-C-methyl-D-erythritol 2-phosphate + ADP + H(+). The protein operates within isoprenoid biosynthesis; isopentenyl diphosphate biosynthesis via DXP pathway; isopentenyl diphosphate from 1-deoxy-D-xylulose 5-phosphate: step 3/6. Catalyzes the phosphorylation of the position 2 hydroxy group of 4-diphosphocytidyl-2C-methyl-D-erythritol. This is 4-diphosphocytidyl-2-C-methyl-D-erythritol kinase from Nostoc punctiforme (strain ATCC 29133 / PCC 73102).